Reading from the N-terminus, the 679-residue chain is UvrABC system protein B (679 aa).

Positions 25-176 constitute a Helicase ATP-binding domain; sequence KGVNTGKEFQ…NLRSYLRSLV (152 aa). 38–45 serves as a coordination point for ATP; it reads GATGTGKT. Residues 91–114 carry the Beta-hairpin motif; the sequence is YYDYYQPEAYVPVSDTYIAKTASI. A Helicase C-terminal domain is found at 429-583; that stretch reads QIEDLLSEIR…KKYNQVNGIT (155 aa). In terms of domain architecture, UVR spans 639–674; that stretch reads PDLIEKLEIKMKDAAKELNFEEAANLRDRIKKLRQK.

Belongs to the UvrB family. Forms a heterotetramer with UvrA during the search for lesions. Interacts with UvrC in an incision complex.

It is found in the cytoplasm. The UvrABC repair system catalyzes the recognition and processing of DNA lesions. A damage recognition complex composed of 2 UvrA and 2 UvrB subunits scans DNA for abnormalities. Upon binding of the UvrA(2)B(2) complex to a putative damaged site, the DNA wraps around one UvrB monomer. DNA wrap is dependent on ATP binding by UvrB and probably causes local melting of the DNA helix, facilitating insertion of UvrB beta-hairpin between the DNA strands. Then UvrB probes one DNA strand for the presence of a lesion. If a lesion is found the UvrA subunits dissociate and the UvrB-DNA preincision complex is formed. This complex is subsequently bound by UvrC and the second UvrB is released. If no lesion is found, the DNA wraps around the other UvrB subunit that will check the other stand for damage. The sequence is that of UvrABC system protein B from Prochlorococcus marinus (strain MIT 9301).